Here is a 260-residue protein sequence, read N- to C-terminus: Carbonic anhydrase 2 (260 aa).

S2 is modified (N-acetylserine). S2 is modified (phosphoserine). The Alpha-carbonic anhydrase domain maps to H3–F259. A disordered region spans residues W16–Q39. H64 functions as the Proton donor/acceptor in the catalytic mechanism. The residue at position 87 (S87) is a Phosphoserine. H94, H96, and H119 together coordinate Zn(2+). S165 is modified (phosphoserine). A substrate-binding site is contributed by T198–T199. S232 carries the phosphoserine modification.

The protein belongs to the alpha-carbonic anhydrase family. In terms of assembly, interacts with SLC4A4 and SLC26A6. Interaction with SLC4A7 regulates SLC4A7 transporter activity. Zn(2+) serves as cofactor.

It localises to the cytoplasm. The protein resides in the cell membrane. It catalyses the reaction hydrogencarbonate + H(+) = CO2 + H2O. The enzyme catalyses urea = cyanamide + H2O. Inhibited by acetazolamide. Catalyzes the reversible hydration of carbon dioxide. Can also hydrate cyanamide to urea. Involved in the regulation of fluid secretion into the anterior chamber of the eye. Essential for bone resorption and osteoclast differentiation. Contributes to intracellular pH regulation in the duodenal upper villous epithelium during proton-coupled peptide absorption. Stimulates the chloride-bicarbonate exchange activity of SLC26A6. The protein is Carbonic anhydrase 2 (Ca2) of Rattus norvegicus (Rat).